The sequence spans 215 residues: Cytochrome b6 (215 aa).

A helical membrane pass occupies residues 32–52 (IFYCFGGLVLTCFLIQVATGF). Cys-35 provides a ligand contact to heme c. His-86 and His-100 together coordinate heme b. The next 3 membrane-spanning stretches (helical) occupy residues 90–110 (ASMM…TGGF), 116–136 (LTWV…VTGY), and 186–206 (AHTF…FLMI). Residues His-187 and His-202 each coordinate heme b.

It belongs to the cytochrome b family. PetB subfamily. As to quaternary structure, the 4 large subunits of the cytochrome b6-f complex are cytochrome b6, subunit IV (17 kDa polypeptide, PetD), cytochrome f and the Rieske protein, while the 4 small subunits are PetG, PetL, PetM and PetN. The complex functions as a dimer. Heme b serves as cofactor. Requires heme c as cofactor.

It localises to the plastid. It is found in the chloroplast thylakoid membrane. Functionally, component of the cytochrome b6-f complex, which mediates electron transfer between photosystem II (PSII) and photosystem I (PSI), cyclic electron flow around PSI, and state transitions. The protein is Cytochrome b6 of Phaeodactylum tricornutum (strain CCAP 1055/1).